The sequence spans 182 residues: ATP-dependent protease subunit HslV (182 aa).

The active site involves Thr-12. Na(+) is bound by residues Ala-167, Cys-170, and Thr-173.

It belongs to the peptidase T1B family. HslV subfamily. As to quaternary structure, a double ring-shaped homohexamer of HslV is capped on each side by a ring-shaped HslU homohexamer. The assembly of the HslU/HslV complex is dependent on binding of ATP.

The protein localises to the cytoplasm. It carries out the reaction ATP-dependent cleavage of peptide bonds with broad specificity.. Its activity is regulated as follows. Allosterically activated by HslU binding. In terms of biological role, protease subunit of a proteasome-like degradation complex believed to be a general protein degrading machinery. In Paramagnetospirillum magneticum (strain ATCC 700264 / AMB-1) (Magnetospirillum magneticum), this protein is ATP-dependent protease subunit HslV.